Here is a 165-residue protein sequence, read N- to C-terminus: Cyclic pyranopterin monophosphate synthase (165 aa).

Substrate contacts are provided by residues 75 to 77 and 115 to 116; these read MCH and ME. Residue D130 is part of the active site.

This sequence belongs to the MoaC family. Homohexamer; trimer of dimers.

The enzyme catalyses (8S)-3',8-cyclo-7,8-dihydroguanosine 5'-triphosphate = cyclic pyranopterin phosphate + diphosphate. The protein operates within cofactor biosynthesis; molybdopterin biosynthesis. Its function is as follows. Catalyzes the conversion of (8S)-3',8-cyclo-7,8-dihydroguanosine 5'-triphosphate to cyclic pyranopterin monophosphate (cPMP). This is Cyclic pyranopterin monophosphate synthase from Halalkalibacterium halodurans (strain ATCC BAA-125 / DSM 18197 / FERM 7344 / JCM 9153 / C-125) (Bacillus halodurans).